We begin with the raw amino-acid sequence, 879 residues long: Valine--tRNA ligase (879 aa).

Positions 45–55 (PNVTGKLHLGH) match the 'HIGH' region motif. The short motif at 521–525 (KMSKS) is the 'KMSKS' region element. Residue Lys524 coordinates ATP. Positions 806 to 879 (LTELVNVDEE…ERMKELKESK (74 aa)) form a coiled coil.

Belongs to the class-I aminoacyl-tRNA synthetase family. ValS type 1 subfamily. Monomer.

The protein resides in the cytoplasm. It carries out the reaction tRNA(Val) + L-valine + ATP = L-valyl-tRNA(Val) + AMP + diphosphate. In terms of biological role, catalyzes the attachment of valine to tRNA(Val). As ValRS can inadvertently accommodate and process structurally similar amino acids such as threonine, to avoid such errors, it has a 'posttransfer' editing activity that hydrolyzes mischarged Thr-tRNA(Val) in a tRNA-dependent manner. The chain is Valine--tRNA ligase from Lactobacillus johnsonii (strain CNCM I-12250 / La1 / NCC 533).